The primary structure comprises 495 residues: ATP synthase subunit beta, chloroplastic (495 aa).

172 to 179 (GGAGVGKT) provides a ligand contact to ATP.

It belongs to the ATPase alpha/beta chains family. F-type ATPases have 2 components, CF(1) - the catalytic core - and CF(0) - the membrane proton channel. CF(1) has five subunits: alpha(3), beta(3), gamma(1), delta(1), epsilon(1). CF(0) has four main subunits: a(1), b(1), b'(1) and c(9-12).

It localises to the plastid. It is found in the chloroplast thylakoid membrane. The catalysed reaction is ATP + H2O + 4 H(+)(in) = ADP + phosphate + 5 H(+)(out). Functionally, produces ATP from ADP in the presence of a proton gradient across the membrane. The catalytic sites are hosted primarily by the beta subunits. This Bowiea volubilis (Climbing onion) protein is ATP synthase subunit beta, chloroplastic.